The following is a 356-amino-acid chain: Xylose/arabinose import permease protein XylH (356 aa).

The next 10 membrane-spanning stretches (helical) occupy residues 14–34, 41–61, 70–90, 96–116, 126–146, 161–181, 211–231, 242–262, 266–286, and 287–307; these read LFLV…AYFS, IFQY…LMLC, ALAN…YQAI, IVVS…MNGL, LITT…YSGG, VSIL…LILL, VKII…IIQG, FTAD…TSLV, GSLV…NGFN, and ILGI…VVVM.

The protein belongs to the binding-protein-dependent transport system permease family. In terms of assembly, the complex is composed of two ATP-binding proteins (XylG), two transmembrane proteins (XylH) and a solute-binding protein (XylF).

The protein resides in the cell membrane. Its function is as follows. Part of the ABC transporter complex XylFGH involved in the uptake of xylose and arabinose. Responsible for the translocation of the substrate across the membrane. The sequence is that of Xylose/arabinose import permease protein XylH from Sulfolobus acidocaldarius (strain ATCC 33909 / DSM 639 / JCM 8929 / NBRC 15157 / NCIMB 11770).